The chain runs to 760 residues: Probable 3',5'-cyclic phosphodiesterase pde-6 (760 aa).

Disordered regions lie at residues M1–A47 and K410–R429. The segment covering P33 to A47 has biased composition (low complexity). The segment covering S412–R429 has biased composition (basic and acidic residues). Residues E426–W750 form the PDEase domain. The active-site Proton donor is H502. A divalent metal cation-binding residues include H506, H542, D543, and D656.

Belongs to the cyclic nucleotide phosphodiesterase family. A divalent metal cation serves as cofactor.

It carries out the reaction a nucleoside 3',5'-cyclic phosphate + H2O = a nucleoside 5'-phosphate + H(+). This chain is Probable 3',5'-cyclic phosphodiesterase pde-6 (pde-6), found in Caenorhabditis elegans.